Reading from the N-terminus, the 127-residue chain is uncharacterized protein (127 aa).

This is an uncharacterized protein from Escherichia coli (strain K12).